Reading from the N-terminus, the 1174-residue chain is Probable pyruvate-flavodoxin oxidoreductase (1174 aa).

4Fe-4S ferredoxin-type domains lie at 680–709 (EIPIWKEELCTQCNHCVAACPHSAIRAKVV) and 736–765 (YVLQVAPEDCTGCNLCVEVCPAKDRQNPEI). [4Fe-4S] cluster contacts are provided by Cys-689, Cys-692, Cys-695, Cys-699, Cys-745, Cys-748, Cys-751, Cys-755, Cys-819, Cys-822, Cys-847, and Cys-1071.

It belongs to the pyruvate:ferredoxin/flavodoxin oxidoreductase family. The cofactor is [4Fe-4S] cluster.

It catalyses the reaction oxidized [flavodoxin] + pyruvate + CoA + 2 H(+) = reduced [flavodoxin] + acetyl-CoA + CO2. In terms of biological role, oxidoreductase required for the transfer of electrons from pyruvate to flavodoxin. The chain is Probable pyruvate-flavodoxin oxidoreductase (ydbK) from Escherichia coli (strain K12).